A 53-amino-acid polypeptide reads, in one-letter code: Bowman-Birk type proteinase inhibitor II-4 (53 aa).

Intrachain disulfides connect Cys-8–Cys-23, Cys-13–Cys-21, Cys-30–Cys-37, and Cys-34–Cys-49.

It belongs to the Bowman-Birk serine protease inhibitor family.

The polypeptide is Bowman-Birk type proteinase inhibitor II-4 (Triticum aestivum (Wheat)).